Reading from the N-terminus, the 300-residue chain is Zinc finger protein 705B (300 aa).

Positions 7 to 78 constitute a KRAB domain; the sequence is VTFEDVAIDF…GRVFLQDQNP (72 aa). 3 consecutive C2H2-type zinc fingers follow at residues 172 to 194, 200 to 222, and 228 to 250; these read YQCN…KMTH, YACH…EKTH, and YKCH…ERTH. A C2H2-type 4; degenerate zinc finger spans residues 256 to 278; that stretch reads YECDKSGKAFSQSSGFRGNKIIH.

It belongs to the krueppel C2H2-type zinc-finger protein family.

It localises to the nucleus. May be involved in transcriptional regulation. The protein is Zinc finger protein 705B (ZNF705B) of Homo sapiens (Human).